We begin with the raw amino-acid sequence, 275 residues long: 4-hydroxy-tetrahydrodipicolinate reductase (275 aa).

NAD(+) is bound by residues 13-18 (GAAGKM) and 108-110 (GTT). The active-site Proton donor/acceptor is H164. H165 lines the (S)-2,3,4,5-tetrahydrodipicolinate pocket. Catalysis depends on K168, which acts as the Proton donor. Residue 174 to 175 (GT) participates in (S)-2,3,4,5-tetrahydrodipicolinate binding.

This sequence belongs to the DapB family.

The protein resides in the cytoplasm. It catalyses the reaction (S)-2,3,4,5-tetrahydrodipicolinate + NAD(+) + H2O = (2S,4S)-4-hydroxy-2,3,4,5-tetrahydrodipicolinate + NADH + H(+). The catalysed reaction is (S)-2,3,4,5-tetrahydrodipicolinate + NADP(+) + H2O = (2S,4S)-4-hydroxy-2,3,4,5-tetrahydrodipicolinate + NADPH + H(+). The protein operates within amino-acid biosynthesis; L-lysine biosynthesis via DAP pathway; (S)-tetrahydrodipicolinate from L-aspartate: step 4/4. Functionally, catalyzes the conversion of 4-hydroxy-tetrahydrodipicolinate (HTPA) to tetrahydrodipicolinate. This chain is 4-hydroxy-tetrahydrodipicolinate reductase, found in Rippkaea orientalis (strain PCC 8801 / RF-1) (Cyanothece sp. (strain PCC 8801)).